Here is a 157-residue protein sequence, read N- to C-terminus: Pyruvoyl-dependent arginine decarboxylase 2 (157 aa).

Serine 43 is subject to Pyruvic acid (Ser).

This sequence belongs to the PdaD family. Pyruvate is required as a cofactor.

It catalyses the reaction L-arginine + H(+) = agmatine + CO2. The polypeptide is Pyruvoyl-dependent arginine decarboxylase 2 (pdaD2) (Archaeoglobus fulgidus (strain ATCC 49558 / DSM 4304 / JCM 9628 / NBRC 100126 / VC-16)).